The primary structure comprises 476 residues: Ribulose bisphosphate carboxylase large chain (476 aa).

Residues 1-2 (MS) constitute a propeptide that is removed on maturation. At Pro-3 the chain carries N-acetylproline. Residue Lys-14 is modified to N6,N6,N6-trimethyllysine. Asn-123 and Thr-173 together coordinate substrate. The active-site Proton acceptor is the Lys-175. A substrate-binding site is contributed by Lys-177. Mg(2+)-binding residues include Lys-201, Asp-203, and Glu-204. Lys-201 carries the N6-carboxylysine modification. Catalysis depends on His-294, which acts as the Proton acceptor. The substrate site is built by Arg-295, His-327, and Ser-379.

The protein belongs to the RuBisCO large chain family. Type I subfamily. In terms of assembly, heterohexadecamer of 8 large chains and 8 small chains; disulfide-linked. The disulfide link is formed within the large subunit homodimers. The cofactor is Mg(2+). In terms of processing, the disulfide bond which can form in the large chain dimeric partners within the hexadecamer appears to be associated with oxidative stress and protein turnover.

It is found in the plastid. It localises to the chloroplast. It carries out the reaction 2 (2R)-3-phosphoglycerate + 2 H(+) = D-ribulose 1,5-bisphosphate + CO2 + H2O. It catalyses the reaction D-ribulose 1,5-bisphosphate + O2 = 2-phosphoglycolate + (2R)-3-phosphoglycerate + 2 H(+). Its function is as follows. RuBisCO catalyzes two reactions: the carboxylation of D-ribulose 1,5-bisphosphate, the primary event in carbon dioxide fixation, as well as the oxidative fragmentation of the pentose substrate in the photorespiration process. Both reactions occur simultaneously and in competition at the same active site. In Phaseolus vulgaris (Kidney bean), this protein is Ribulose bisphosphate carboxylase large chain.